The primary structure comprises 475 residues: Stromelysin-1 (475 aa).

Residues 1–17 form the signal peptide; the sequence is MKGLPVLLWLCTAVCSS. Residues 18–97 constitute a propeptide, activation peptide; sequence YPLHGSEEDA…PRCGVPDVGG (80 aa). A Cysteine switch motif is present at residues 88 to 95; it reads PRCGVPDV. C90 contributes to the Zn(2+) binding site. N-linked (GlcNAc...) asparagine glycosylation occurs at N118. 2 residues coordinate Ca(2+): D122 and D156. 2 residues coordinate Zn(2+): H166 and D168. Positions 173, 174, 176, and 178 each coordinate Ca(2+). H181 contributes to the Zn(2+) binding site. The Ca(2+) site is built by G188, N190, and D192. H194 lines the Zn(2+) pocket. The Ca(2+) site is built by D196, D197, and E199. Residue H216 coordinates Zn(2+). E217 is an active-site residue. Positions 220 and 226 each coordinate Zn(2+). Hemopexin repeat units follow at residues 285 to 334, 335 to 381, 383 to 431, and 432 to 475; these read LPMC…WPSL, PSNM…GLPE, VQKI…FPGI, and GTKV…WFNC. C288 and C475 are joined by a disulfide. D295 contributes to the Ca(2+) binding site. Ca(2+) is bound by residues D387 and D436.

This sequence belongs to the peptidase M10A family. Requires Ca(2+) as cofactor. The cofactor is Zn(2+).

The protein localises to the secreted. Its subcellular location is the extracellular space. It localises to the extracellular matrix. The enzyme catalyses Preferential cleavage where P1', P2' and P3' are hydrophobic residues.. Its activity is regulated as follows. Inhibited by a synthetic peptide corresponding to the inhibitory cysteine switch motif. Inhibited by ethylenediaminetetraacetic acid (EDTA), 1,10-pheanthroline, 2-mecaptoethanol, dithiothreitol and metalloproteinase inhibitor protein TIMP. Its function is as follows. Can degrade fibronectin, laminin, gelatins of type I, III, IV, and V; collagens III, IV, X, and IX, and cartilage proteoglycans. Activates procollagenase. Metalloproteinase with a rather broad substrate specificity that can degrade fibronectin, laminin, gelatins of type I, III, IV, and V; collagens III, IV, X, and IX, and cartilage proteoglycans. Activates different molecules including growth factors, plasminogen or other matrix metalloproteinases such as MMP9. Once released into the extracellular matrix (ECM), the inactive pro-enzyme is activated by the plasmin cascade signaling pathway. Also acts intracellularly. For example, in dopaminergic neurons, gets activated by the serine protease HTRA2 upon stress and plays a pivotal role in DA neuronal degeneration by mediating microglial activation and alpha-synuclein/SNCA cleavage. In addition, plays a role in immune response and possesses antiviral activity against various viruses. Mechanistically, translocates from the cytoplasm into the cell nucleus upon virus infection to influence NF-kappa-B activities. This Rattus norvegicus (Rat) protein is Stromelysin-1 (Mmp3).